A 512-amino-acid chain; its full sequence is ATP synthase subunit alpha 2 (512 aa).

Gly169–Thr176 lines the ATP pocket.

The protein belongs to the ATPase alpha/beta chains family. In terms of assembly, F-type ATPases have 2 components, CF(1) - the catalytic core - and CF(0) - the membrane proton channel. CF(1) has five subunits: alpha(3), beta(3), gamma(1), delta(1), epsilon(1). CF(0) has four main subunits: a(1), b(1), b'(1) and c(9-12).

The protein resides in the cell inner membrane. It carries out the reaction ATP + H2O + 4 H(+)(in) = ADP + phosphate + 5 H(+)(out). Functionally, produces ATP from ADP in the presence of a proton gradient across the membrane. The alpha chain is a regulatory subunit. The sequence is that of ATP synthase subunit alpha 2 from Dinoroseobacter shibae (strain DSM 16493 / NCIMB 14021 / DFL 12).